Reading from the N-terminus, the 1437-residue chain is Envelopment polyprotein (1437 aa).

Positions 1–21 are cleaved as a signal peptide; sequence MAISTSLLIVALLIKLCLVNT. The Lumenal segment spans residues 22–207; that stretch reads APPISKCFQD…GYMASSICQN (186 aa). Asn-65 and Asn-88 each carry an N-linked (GlcNAc...) asparagine; by host glycan. The helical transmembrane segment at 208–228 threads the bilayer; the sequence is IELIIIIILTLAIFIFMCIIT. Topologically, residues 229 to 312 are cytoplasmic; that stretch reads RTYICYLMLP…RVARSLCKSK (84 aa). Residues 313-333 traverse the membrane as a helical segment; the sequence is GSSLVISILTAMLILSFITPL. Over 334 to 373 the chain is Lumenal; the sequence is EAMTTNYPDDKKFTLKEVNDIVLGRDMEQELKSSILILMS. The helical transmembrane segment at 374–394 threads the bilayer; the sequence is ICGIGIILIFFGLTVLLEIVL. Residues 395–460 lie on the Cytoplasmic side of the membrane; sequence ELIAKRSTIF…TYYIKIRNLK (66 aa). The chain crosses the membrane as a helical span at residues 461 to 481; sequence LIMLIFSIVILMQNATMLVVA. Residues 482–1391 are Lumenal-facing; the sequence is GENCWTNTEI…EPLNNFFGNY (910 aa). Residues Asn-627 and Asn-1173 are each glycosylated (N-linked (GlcNAc...) asparagine; by host). Residues 1392–1412 traverse the membrane as a helical segment; that stretch reads LNMFLYILGGIILLFLALYIL. Residues 1413–1437 lie on the Cytoplasmic side of the membrane; it reads MPMCARLRDELKRNERLHQMEMKKR.

It belongs to the orthobunyavirus envelope glycoprotein family. As to quaternary structure, glycoprotein C and Glycoprotein N interact with each other. In terms of processing, specific enzymatic cleavages in vivo yield mature proteins including nonstructural protein NSm, Glycoprotein C, and Glycoprotein N.

The protein resides in the virion membrane. It localises to the host Golgi apparatus membrane. Its subcellular location is the host endoplasmic reticulum membrane. Functionally, glycoprotein C and Glycoprotein N interact with each other and are present at the surface of the virion. They are able to attach the virion to a cell receptor and to promote fusion of membranes after endocytosis of the virion. This chain is Envelopment polyprotein (GP), found in Culex.